The primary structure comprises 706 residues: Transferrin-binding protein B (706 aa).

A signal peptide spans 1–20 (MKHIPLTTLCVAISAVLLTA). A lipid anchor (N-palmitoyl cysteine) is attached at Cys21. Residue Cys21 is the site of S-diacylglycerol cysteine attachment. Disordered stretches follow at residues 26-92 (GSNP…KEQV) and 384-412 (GSAIASDKEKDSETKHPFTSDAKDRLEGG). The span at 42 to 51 (GNTGNTGNAG) shows a compositional bias: gly residues. Residues 389-410 (SDKEKDSETKHPFTSDAKDRLE) are compositionally biased toward basic and acidic residues.

The protein belongs to the TbpB family.

It is found in the cell outer membrane. Its subcellular location is the cell surface. Its function is as follows. Moraxella acquires iron by extracting it from serum transferrin (TF) in its human host. Acts as a transferrin receptor and is required for transferrin utilization. In Moraxella catarrhalis (Branhamella catarrhalis), this protein is Transferrin-binding protein B.